We begin with the raw amino-acid sequence, 400 residues long: Subtilisin-like protease 7 (400 aa).

Residues methionine 1–glycine 20 form the signal peptide. Residues alanine 21–asparagine 119 constitute a propeptide that is removed on maturation. The Inhibitor I9 domain maps to lysine 36–isoleucine 118. The Peptidase S8 domain maps to serine 129–methionine 400. Active-site charge relay system residues include aspartate 161 and histidine 192. Residues asparagine 222 and asparagine 252 are each glycosylated (N-linked (GlcNAc...) asparagine). The Charge relay system role is filled by serine 346. The N-linked (GlcNAc...) asparagine glycan is linked to asparagine 396.

The protein belongs to the peptidase S8 family.

The protein localises to the secreted. In terms of biological role, secreted subtilisin-like serine protease with keratinolytic activity that contributes to pathogenicity. This chain is Subtilisin-like protease 7 (SUB7), found in Trichophyton soudanense.